Reading from the N-terminus, the 135-residue chain is Transcriptional regulator HosA (135 aa).

The HTH marR-type domain occupies 4-134 (RNKAFHQLRQ…FMQLVRKMMN (131 aa)). The H-T-H motif DNA-binding region spans 48–71 (QVALIEAAVSTKATLAEMLARMEN).

Functionally, involved in the temperature-dependent positive control of flagellum-driven swimming motility and cellular aggregation. Regulates fliC expression by directly interacting with fliC promoter. This Escherichia coli O127:H6 (strain E2348/69 / EPEC) protein is Transcriptional regulator HosA (hosA).